A 254-amino-acid chain; its full sequence is Bowman-Birk type bran trypsin inhibitor (254 aa).

An N-terminal signal peptide occupies residues 1–22 (MSNTTMATSTILLFLLAGLAAA). Residues 23–118 (HGDGDTTIRL…KCTAALDGLS (96 aa)) constitute a propeptide that is removed on maturation. 3 consecutive repeats follow at residues 46–120 (KPWD…LSME), 121–187 (RPWK…FCTP), and 188–251 (RPWG…CKPR). Cystine bridges form between Cys125/Cys185, Cys126/Cys143, Cys152/Cys159, Cys156/Cys172, Cys193/Cys248, Cys194/Cys209, Cys199/Cys207, Cys216/Cys223, and Cys220/Cys236. The propeptide occupies 252–254 (AEN).

This sequence belongs to the Bowman-Birk serine protease inhibitor family.

The protein is Bowman-Birk type bran trypsin inhibitor (RBBI3.3) of Oryza sativa subsp. japonica (Rice).